The following is a 380-amino-acid chain: Putative 8-amino-7-oxononanoate synthase (380 aa).

Arg-18 provides a ligand contact to substrate. A pyridoxal 5'-phosphate-binding site is contributed by Gly-106–Tyr-107. Residue His-131 participates in substrate binding. Pyridoxal 5'-phosphate-binding positions include Ser-179, Asp-205 to His-208, and Thr-236 to Lys-239. Lys-239 is modified (N6-(pyridoxal phosphate)lysine). Thr-352 contributes to the substrate binding site.

It belongs to the class-II pyridoxal-phosphate-dependent aminotransferase family. BioF subfamily. In terms of assembly, homodimer. Pyridoxal 5'-phosphate is required as a cofactor.

It catalyses the reaction 6-carboxyhexanoyl-[ACP] + L-alanine + H(+) = (8S)-8-amino-7-oxononanoate + holo-[ACP] + CO2. It functions in the pathway cofactor biosynthesis; biotin biosynthesis. Functionally, catalyzes the decarboxylative condensation of pimeloyl-[acyl-carrier protein] and L-alanine to produce 8-amino-7-oxononanoate (AON), [acyl-carrier protein], and carbon dioxide. This chain is Putative 8-amino-7-oxononanoate synthase (bioF), found in Neisseria gonorrhoeae (strain ATCC 700825 / FA 1090).